We begin with the raw amino-acid sequence, 381 residues long: Probable glucuronosyltransferase Os04g0103100 (381 aa).

The Cytoplasmic segment spans residues methionine 1–arginine 69. The tract at residues histidine 21–histidine 50 is disordered. Residues alanine 26 to serine 46 show a composition bias toward low complexity. Residues phenylalanine 70–proline 90 form a helical; Signal-anchor for type II membrane protein membrane-spanning segment. Residues arginine 91–lysine 381 lie on the Lumenal side of the membrane. The interval isoleucine 96–histidine 122 is disordered. N-linked (GlcNAc...) asparagine glycans are attached at residues asparagine 194 and asparagine 296.

The protein belongs to the glycosyltransferase 43 family.

The protein resides in the golgi apparatus membrane. In terms of biological role, involved in the synthesis of glucuronoxylan hemicellulose in secondary cell walls. This Oryza sativa subsp. japonica (Rice) protein is Probable glucuronosyltransferase Os04g0103100.